Consider the following 206-residue polypeptide: MDLTVKTLEGKDAGKVSLSDAIFGLEPREDIIARVVRWQLAKRQQGTHKAKGRAEVARTGAKMYKQKGTGRARHHSARAPQFRGGGKAHGPVVRSHAHDLPKKVRALGLRHALSAKLKAEEIIVLDDLVANEAKTKALAGAFASLGLTNALIIGGAEIENNFKLAAQNIPNVDVLPVQGINVYDILRRGKLVLSKAAVEALEERFK.

The interval 63 to 93 (MYKQKGTGRARHHSARAPQFRGGGKAHGPVV) is disordered. Basic residues predominate over residues 64–77 (YKQKGTGRARHHSA).

Belongs to the universal ribosomal protein uL4 family. As to quaternary structure, part of the 50S ribosomal subunit.

Its function is as follows. One of the primary rRNA binding proteins, this protein initially binds near the 5'-end of the 23S rRNA. It is important during the early stages of 50S assembly. It makes multiple contacts with different domains of the 23S rRNA in the assembled 50S subunit and ribosome. Functionally, forms part of the polypeptide exit tunnel. This is Large ribosomal subunit protein uL4 from Sinorhizobium fredii (strain NBRC 101917 / NGR234).